Reading from the N-terminus, the 361-residue chain is Phospho-N-acetylmuramoyl-pentapeptide-transferase (361 aa).

Transmembrane regions (helical) follow at residues 28–48 (LAII…IEFL), 74–94 (TMGG…LADL), 99–119 (IWIT…DDYA), 133–153 (SKLL…EYLD), 168–188 (LSLD…VGSS), 203–223 (VPIA…GNLI), 236–256 (TGEL…FLWF), 263–283 (VFMG…ISVI), 288–308 (IVLA…ILQV), and 338–358 (KVVI…LSSL).

The protein belongs to the glycosyltransferase 4 family. MraY subfamily. It depends on Mg(2+) as a cofactor.

Its subcellular location is the cell membrane. The catalysed reaction is UDP-N-acetyl-alpha-D-muramoyl-L-alanyl-gamma-D-glutamyl-meso-2,6-diaminopimeloyl-D-alanyl-D-alanine + di-trans,octa-cis-undecaprenyl phosphate = di-trans,octa-cis-undecaprenyl diphospho-N-acetyl-alpha-D-muramoyl-L-alanyl-D-glutamyl-meso-2,6-diaminopimeloyl-D-alanyl-D-alanine + UMP. It functions in the pathway cell wall biogenesis; peptidoglycan biosynthesis. Its function is as follows. Catalyzes the initial step of the lipid cycle reactions in the biosynthesis of the cell wall peptidoglycan: transfers peptidoglycan precursor phospho-MurNAc-pentapeptide from UDP-MurNAc-pentapeptide onto the lipid carrier undecaprenyl phosphate, yielding undecaprenyl-pyrophosphoryl-MurNAc-pentapeptide, known as lipid I. This Rickettsia rickettsii protein is Phospho-N-acetylmuramoyl-pentapeptide-transferase.